We begin with the raw amino-acid sequence, 1063 residues long: Structural polyprotein (1063 aa).

Positions 1–131 (MASTTPITME…LGPPTNPFQA (131 aa)) are disordered. Residues 30-69 (GASQSRRPRPPRQRDSSTSGDDSGRDSGGPRRRRGNRGRG) are human C1QBP/SF2P32-binding. S46 is subject to Phosphoserine; by host. The span at 70 to 87 (QLRDWSRAPPPPEERQES) shows a compositional bias: basic and acidic residues. Pro residues predominate over residues 93–107 (APKPSRAPPQQPQPP). Cysteines 153 and 197 form a disulfide. The interval 279–300 (GAPQAFLAGLLLAAVAVGTARA) is functions as E2 signal peptide. The Extracellular segment spans residues 301–534 (GLQPRADMAA…LWLATANALS (234 aa)). 4 N-linked (GlcNAc...) asparagine; by host glycosylation sites follow: N353, N371, N410, and N429. A helical transmembrane segment spans residues 535 to 555 (LDHALAAFVLLVPWVLIFMVC). At 556–582 (RRACRRRGAAAALTAVVLQGYNPPAYG) the chain is on the cytoplasmic side. The segment at 563–582 (GAAAALTAVVLQGYNPPAYG) is functions as E1 signal peptide. The Extracellular segment spans residues 583-1028 (EEAFTYLCTA…QTWAEWAAAH (446 aa)). Disulfide bonds link C590–C595, C619–C824, C641–C653, C699–C712, C758–C767, C807–C817, C931–C934, and C950–C983. N658 carries N-linked (GlcNAc...) asparagine; by host glycosylation. Ca(2+) is bound by residues N670 and A671. D718 and T719 together coordinate Ca(2+). 2 N-linked (GlcNAc...) asparagine; by host glycosylation sites follow: N759 and N791. O-linked (GalNAc...) threonine; by host glycans are attached at residues T1011 and T1012. The helical transmembrane segment at 1029–1049 (WWQLTLGAICALLLAGLLACC) threads the bilayer. Residues 1050–1063 (AKCLYYLRGAIAPR) lie on the Extracellular side of the membrane.

In terms of assembly, homodimer; further assembles into homooligomer. Interacts with human C1QBP. Interacts (via N-terminus) with protease/methyltransferase p150. Heterodimer with spike glycoprotein E2. As to quaternary structure, heterodimer with spike glycoprotein E1. Structural polyprotein: Specific enzymatic cleavages in vivo yield mature proteins. Two signal peptidase-mediated cleavages within the polyprotein produce the structural proteins capsid, E2, and E1. The E2 signal peptide remains attached to the C-terminus of the capsid protein after cleavage by the signal peptidase. Another signal peptide at E2 C-terminus directs E1 to the ER, with a similar mechanism. In terms of processing, contains three N-linked oligosaccharides. Post-translationally, capsid is phosphorylated on Ser-46 by host. This phosphorylation negatively regulates capsid protein RNA-binding activity. Dephosphorylated by human PP1A.

It is found in the virion. It localises to the host cytoplasm. The protein resides in the host mitochondrion. Its subcellular location is the virion membrane. The protein localises to the host Golgi apparatus membrane. Its function is as follows. Capsid protein interacts with genomic RNA and assembles into icosahedric core particles 65-70 nm in diameter. The resulting nucleocapsid eventually associates with the cytoplasmic domain of E2 at the cell membrane, leading to budding and formation of mature virions from host Golgi membranes. Phosphorylation negatively regulates RNA-binding activity, possibly delaying virion assembly during the viral replication phase. Capsid protein dimerizes and becomes disulfide-linked in the virion. Modulates genomic RNA replication. Modulates subgenomic RNA synthesis by interacting with human C1QBP/SF2P32. Induces both perinuclear clustering of mitochondria and the formation of electron-dense intermitochondrial plaques, both hallmarks of rubella virus infected cells. Induces apoptosis when expressed in transfected cells. Responsible for viral attachment to target host cell, by binding to the cell receptor. Its transport to the plasma membrane depends on interaction with E1 protein. The surface glycoproteins display an irregular helical organization and a pseudo-tetrameric inner nucleocapsid arrangement. In terms of biological role, class II viral fusion protein. Fusion activity is inactive as long as E1 is bound to E2 in mature virion. After virus attachment to target cell and clathrin-mediated endocytosis, acidification of the endosome would induce dissociation of E1/E2 heterodimer and concomitant trimerization of the E1 subunits. This E1 homotrimer is fusion active, and promotes release of viral nucleocapsid in cytoplasm after endosome and viral membrane fusion. The cytoplasmic tail of spike glycoprotein E1 modulates virus release. The surface glycoproteins display an irregular helical organization and a pseudo-tetrameric inner nucleocapsid arrangement. This chain is Structural polyprotein, found in Homo sapiens (Human).